Reading from the N-terminus, the 268-residue chain is NADH-quinone oxidoreductase subunit B 2 (268 aa).

Cys42, Cys43, Cys108, and Cys138 together coordinate [4Fe-4S] cluster. Residues 237–268 (SPNKAKGVAPEIRHNDLKRPAVEVDHARDEQR) form a disordered region. The span at 247–268 (EIRHNDLKRPAVEVDHARDEQR) shows a compositional bias: basic and acidic residues.

It belongs to the complex I 20 kDa subunit family. As to quaternary structure, NDH-1 is composed of 14 different subunits. Subunits NuoB, C, D, E, F, and G constitute the peripheral sector of the complex. Requires [4Fe-4S] cluster as cofactor.

The protein resides in the cell membrane. It carries out the reaction a quinone + NADH + 5 H(+)(in) = a quinol + NAD(+) + 4 H(+)(out). Its function is as follows. NDH-1 shuttles electrons from NADH, via FMN and iron-sulfur (Fe-S) centers, to quinones in the respiratory chain. The immediate electron acceptor for the enzyme in this species is believed to be ubiquinone. Couples the redox reaction to proton translocation (for every two electrons transferred, four hydrogen ions are translocated across the cytoplasmic membrane), and thus conserves the redox energy in a proton gradient. This chain is NADH-quinone oxidoreductase subunit B 2, found in Roseiflexus castenholzii (strain DSM 13941 / HLO8).